We begin with the raw amino-acid sequence, 318 residues long: Aspartate carbamoyltransferase catalytic subunit (318 aa).

Carbamoyl phosphate-binding residues include arginine 58 and threonine 59. Lysine 86 is a binding site for L-aspartate. Positions 108, 141, and 144 each coordinate carbamoyl phosphate. L-aspartate is bound by residues arginine 174 and arginine 226. Carbamoyl phosphate-binding residues include glycine 270 and proline 271.

This sequence belongs to the aspartate/ornithine carbamoyltransferase superfamily. ATCase family. Heterododecamer (2C3:3R2) of six catalytic PyrB chains organized as two trimers (C3), and six regulatory PyrI chains organized as three dimers (R2).

The catalysed reaction is carbamoyl phosphate + L-aspartate = N-carbamoyl-L-aspartate + phosphate + H(+). It functions in the pathway pyrimidine metabolism; UMP biosynthesis via de novo pathway; (S)-dihydroorotate from bicarbonate: step 2/3. Catalyzes the condensation of carbamoyl phosphate and aspartate to form carbamoyl aspartate and inorganic phosphate, the committed step in the de novo pyrimidine nucleotide biosynthesis pathway. The chain is Aspartate carbamoyltransferase catalytic subunit from Lactobacillus acidophilus (strain ATCC 700396 / NCK56 / N2 / NCFM).